Here is a 335-residue protein sequence, read N- to C-terminus: RNA 3'-terminal phosphate cyclase (335 aa).

ATP contacts are provided by residues Gln101 and 282-285 (HMGD). His306 functions as the Tele-AMP-histidine intermediate in the catalytic mechanism.

Belongs to the RNA 3'-terminal cyclase family. Type 1 subfamily.

The protein localises to the cytoplasm. The catalysed reaction is a 3'-end 3'-phospho-ribonucleotide-RNA + ATP = a 3'-end 2',3'-cyclophospho-ribonucleotide-RNA + AMP + diphosphate. In terms of biological role, catalyzes the conversion of 3'-phosphate to a 2',3'-cyclic phosphodiester at the end of RNA. The mechanism of action of the enzyme occurs in 3 steps: (A) adenylation of the enzyme by ATP; (B) transfer of adenylate to an RNA-N3'P to produce RNA-N3'PP5'A; (C) and attack of the adjacent 2'-hydroxyl on the 3'-phosphorus in the diester linkage to produce the cyclic end product. The biological role of this enzyme is unknown but it is likely to function in some aspects of cellular RNA processing. This chain is RNA 3'-terminal phosphate cyclase, found in Sulfolobus acidocaldarius (strain ATCC 33909 / DSM 639 / JCM 8929 / NBRC 15157 / NCIMB 11770).